Here is a 465-residue protein sequence, read N- to C-terminus: 3-isopropylmalate dehydratase large subunit (465 aa).

3 residues coordinate [4Fe-4S] cluster: Cys347, Cys407, and Cys410.

Belongs to the aconitase/IPM isomerase family. LeuC type 1 subfamily. In terms of assembly, heterodimer of LeuC and LeuD. [4Fe-4S] cluster serves as cofactor.

It carries out the reaction (2R,3S)-3-isopropylmalate = (2S)-2-isopropylmalate. It participates in amino-acid biosynthesis; L-leucine biosynthesis; L-leucine from 3-methyl-2-oxobutanoate: step 2/4. In terms of biological role, catalyzes the isomerization between 2-isopropylmalate and 3-isopropylmalate, via the formation of 2-isopropylmaleate. The polypeptide is 3-isopropylmalate dehydratase large subunit (Tolumonas auensis (strain DSM 9187 / NBRC 110442 / TA 4)).